Reading from the N-terminus, the 835-residue chain is MEGENTTDPPYTTAASSGQSIFVRPPPIAPVLATTSNFSQSELKELHSMSIASTGFVSQSVPYSVTAQWGTNAAASSNVNPIPQASPMLANAPFGRPGTLAPPGLMTSPPAFPGSNPFSTTPRPGMSAGPAQMNPGIHPHMYPPYHSLPGTPQGMWLQPPSMGGIPRAPFLSHPTTFPGSYPFPVRGISPNLPYSGSHPLGASPMGSVGNVHALPGRQPDISPGRKTEELSGIDDRAGSQLVGNRLDAWTAHKSEAGVLYYYNSVTGQSTYEKPPGFGGEPDKVPVQPIPVSMESLPGTDWALVSTNDGKKYYYNNKTKVSSWQIPAEVKDFGKKLEERAMESVASVPSADLTEKGSDLTSLSAPAISNGGRDAASLKTTNFGSSALDLVKKKLHDSGMPVSSTITSEANSGKTTEVTPSGESGNSTGKVKDAPGAGALSDSSSDSEDEDSGPSKEECSKQFKEMLKERGIAPFSKWEKELPKIIFDPRFKAIPSHSVRRSLFEQYVKTRAEEERREKRAAHKAAIEGFRQLLDDASTDIDQHTDYRAFKKKWGNDLRFEAIERKEREGLLNERVLSLKRSAEQKAQEIRAAAASDFKTMLREREISINSHWSKVKDSLRNEPRYRSVAHEDREVFYYEYIAELKAAQRGDDHEMKARDEEDKLRERERELRKRKEREVQEVERVRQKIRRKEASSSYQALLVEKIRDPEASWTESKPILERDPQKRASNPDLEPADKEKLFRDHVKSLYERCVHDFKALLAEALSSEAATLQTEDGKTALNSWSTAKQVLKPDIRYSKMPRQDREVVWRRYVEDISRKQRHENYQEEKQRDYKT.

Polar residues predominate over residues 1–20 (MEGENTTDPPYTTAASSGQS). The tract at residues 1 to 22 (MEGENTTDPPYTTAASSGQSIF) is disordered. 2 WW domains span residues 243–276 (GNRL…KPPG) and 295–328 (SLPG…IPAE). Residues 397–459 (SGMPVSSTIT…DSGPSKEECS (63 aa)) are disordered. Over residues 400–428 (PVSSTITSEANSGKTTEVTPSGESGNSTG) the composition is skewed to polar residues. 3 consecutive FF domains span residues 455–509 (KEEC…YVKT), 519–577 (RAAH…RVLS), and 590–643 (RAAA…YIAE). Disordered regions lie at residues 649–677 (RGDD…RKER) and 714–738 (TESK…PADK). 2 consecutive FF domains span residues 691–748 (RKEA…HVKS) and 750–815 (YERC…YVED).

Belongs to the PRPF40 family. Interacts (via the WW domains) with the phosphorylated C-terminal domain of NRPB1 (via CTD domain). Expressed in roots, shoots, rosette leaves, cauline leaves, stems and flowers.

The protein resides in the nucleus. Its function is as follows. Binds the phosphorylated C-terminal domain (CTD) of the largest subunit of RNA polymerase II and functions as a scaffold for RNA processing machineries. May be involved in pre-mRNA splicing. This is Pre-mRNA-processing protein 40C from Arabidopsis thaliana (Mouse-ear cress).